The following is a 266-amino-acid chain: Oxidoreductase aflX (266 aa).

This sequence belongs to the avfA family.

Its pathway is mycotoxin biosynthesis; aflatoxin biosynthesis. In terms of biological role, oxidoreductase; part of the gene cluster that mediates the biosynthesis of aflatoxins, a group of polyketide-derived furanocoumarins, and part of the most toxic and carcinogenic compounds among the known mycotoxins. The four major aflatoxins produced by A.parasiticus are aflatoxin B1 (AFB1), aflatoxin B2 (AFB2), aflatoxin G1 (AFG1) and aflatoxin G2 (AFG2). Within the aflatoxin pathway, the oxidoreductase aflX seems to be involved in the conversion of versicolorin A (VERA) to demethylsterigmatocystin (DMST), through probable epoxide ring-opening step following versicolorin A oxidation required for the formation of the xanthone ring. The biosynthesis of aflatoxins begins with the norsolorinic acid synthase aflC that combines a hexanoyl starter unit produced by the fatty acid synthase aflA/aflB and 7 malonyl-CoA extender units to synthesize the precursor NOR. The second step is the conversion of NOR to averantin and requires the norsolorinic acid ketoreductase aflD, which catalyzes the dehydration of norsolorinic acid to form (1'S)-averantin. The norsolorinic acid reductases aflE and aflF may also play a role in the conversion of NOR to AVN. The cytochrome P450 monooxygenase aflG then catalyzes the hydroxylation of AVN to 5'hydroxyaverantin (HAVN). The next step is performed by the 5'-hydroxyaverantin dehydrogenase aflH that transforms HAVN to 5'-oxoaverantin (OAVN) which is further converted to averufin (AVF) by aflK that plays a dual role in the pathway, as a 5'-oxoaverantin cyclase that mediates conversion of 5'-oxoaverantin, as well as a versicolorin B synthase in a later step in the pathway. The averufin oxidase aflI catalyzes the conversion of AVF to versiconal hemiacetal acetate (VHA). VHA is then the substrate for the versiconal hemiacetal acetate esterase aflJ to yield versiconal (VAL). Versicolorin B synthase aflK then converts VAL to versicolorin B (VERB) by closing the bisfuran ring of aflatoxin which is required for DNA-binding, thus giving to aflatoxin its activity as a mutagen. Then, the activity of the versicolorin B desaturase aflL leads to versicolorin A (VERA). A branch point starts from VERB since it can also be converted to dihydrodemethylsterigmatocystin (DMDHST), probably also by aflL, VERA being a precursor for aflatoxins B1 and G1, and DMDHST for aflatoxins B2 and G2. Next, the versicolorin reductase aflM and the cytochrome P450 monooxygenase aflN are involved in conversion of VERA to demethylsterigmatocystin (DMST). AflX and aflY seem also involved in this step, through probable aflX-mediated epoxide ring-opening step following versicolorin A oxidation and aflY-mediated Baeyer-Villiger oxidation required for the formation of the xanthone ring. The methyltransferase aflO then leads to the modification of DMST to sterigmatocystin (ST), and of DMDHST to dihydrosterigmatocystin (DHST). Both ST and DHST are then substrates of the O-methyltransferase aflP to yield O-methylsterigmatocystin (OMST) and dihydro-O-methylsterigmatocystin (DHOMST), respectively. Finally OMST is converted to aflatoxins B1 and G1, and DHOMST to aflatoxins B2 and G2, via the action of several enzymes including O-methylsterigmatocystin oxidoreductase aflQ, the cytochrome P450 monooxygenase aflU, but also the NADH-dependent flavin oxidoreductase nadA which is specifically required for the synthesis of AFG1. The polypeptide is Oxidoreductase aflX (Aspergillus parasiticus (strain ATCC 56775 / NRRL 5862 / SRRC 143 / SU-1)).